The following is a 276-amino-acid chain: Diaminopimelate epimerase (276 aa).

Substrate contacts are provided by Asn-13, Gln-46, and Asn-66. Cys-75 functions as the Proton donor in the catalytic mechanism. Residues 76–77, Asn-159, Asn-192, and 210–211 contribute to the substrate site; these read GN and ER. The active-site Proton acceptor is Cys-219. 220–221 provides a ligand contact to substrate; sequence GT.

The protein belongs to the diaminopimelate epimerase family. As to quaternary structure, homodimer.

The protein resides in the cytoplasm. The catalysed reaction is (2S,6S)-2,6-diaminopimelate = meso-2,6-diaminopimelate. The protein operates within amino-acid biosynthesis; L-lysine biosynthesis via DAP pathway; DL-2,6-diaminopimelate from LL-2,6-diaminopimelate: step 1/1. Functionally, catalyzes the stereoinversion of LL-2,6-diaminopimelate (L,L-DAP) to meso-diaminopimelate (meso-DAP), a precursor of L-lysine and an essential component of the bacterial peptidoglycan. The protein is Diaminopimelate epimerase of Pseudomonas putida (strain GB-1).